We begin with the raw amino-acid sequence, 359 residues long: MADQDPGGISPLQQMVASGAGAVVTSLFMTPLDVVKVRLQSQRPSVASELMPPSRLWSLSYAKLPSSLRSTGKCLLYCNGVLEPLYLCPNGARCATWFQDPTRFTGTMDAFVKIVRHEGTRTLWSGLPATLVMTVPATAAYFTAYDQLKAFLCGRALTSDLYAPMVAGALARLGTVTVISPLELVRTKLQAQHLSYRELGTCVRAAVAQGGWRSLWLGWGPTALRDVPFSALYWFNYELVKSWLSGLRPKDQTSVGISFVAGGISGMVAATLTLPFDVVKTQRQVALGAVEALRVMPLNTDSTWLLLRRILAESGTRGLFAGFLPRIIKAAPSCAIMISTYEFGKNFFQRLNREQLLSP.

Residues 1-14 (MADQDPGGISPLQQ) lie on the Mitochondrial intermembrane side of the membrane. Solcar repeat units follow at residues 9-151 (ISPL…LKAF), 159-243 (SDLY…VKSW), and 253-347 (TSVG…GKNF). The helical transmembrane segment at 15–35 (MVASGAGAVVTSLFMTPLDVV) threads the bilayer. At 36 to 121 (KVRLQSQRPS…VKIVRHEGTR (86 aa)) the chain is on the mitochondrial matrix side. Residues C74, C78, C88, and C94 each coordinate [2Fe-2S] cluster. Residues 122-142 (TLWSGLPATLVMTVPATAAYF) traverse the membrane as a helical segment. The Mitochondrial intermembrane portion of the chain corresponds to 143-164 (TAYDQLKAFLCGRALTSDLYAP). The chain crosses the membrane as a helical span at residues 165-185 (MVAGALARLGTVTVISPLELV). The Mitochondrial matrix portion of the chain corresponds to 186–214 (RTKLQAQHLSYRELGTCVRAAVAQGGWRS). Residues 215 to 235 (LWLGWGPTALRDVPFSALYWF) traverse the membrane as a helical segment. Topologically, residues 236–255 (NYELVKSWLSGLRPKDQTSV) are mitochondrial intermembrane. The helical transmembrane segment at 256 to 276 (GISFVAGGISGMVAATLTLPF) threads the bilayer. At 277–317 (DVVKTQRQVALGAVEALRVMPLNTDSTWLLLRRILAESGTR) the chain is on the mitochondrial matrix side. The chain crosses the membrane as a helical span at residues 318–338 (GLFAGFLPRIIKAAPSCAIMI). At 339–359 (STYEFGKNFFQRLNREQLLSP) the chain is on the mitochondrial intermembrane side.

This sequence belongs to the mitochondrial carrier (TC 2.A.29) family. Cleaved and degraded by AFG3L2; degradation by AFG3L2 is regulated by the ability of SLC25A39 to bind iron-sulfur. In absence of mitochondrial glutathione, SLC25A39 binds iron-sulfur, preventing cleavage and degradation by AFG3L2. The presence of mitochondrial glutathione prevents iron-sulfur-binding to SLC25A39, promoting cleavage and degradation by AFG3L2.

It localises to the mitochondrion inner membrane. It carries out the reaction glutathione(in) = glutathione(out). The activity of SLC25A39 is regulated by levels of mitochondrial glutathione via its ability to bind [2Fe-2S] iron-sulfur cluster. Upon physiological levels of mitochondrial glutathione, glutathione prevents iron-sulfur-binding to SLC25A39 promoting cleavage and degradation by AFG3L2. Upon depletion of mitochondrial glutathione, SLC25A39 binds iron-sulfur, preventing cleavage and degradation by AFG3L2. Functionally, mitochondrial transporter required for glutathione import into mitochondria. Glutathione, which plays key roles in oxidative metabolism, is produced exclusively in the cytosol and is imported in many organelles. Mitochondrial glutathione is required for the activity and stability of proteins containing iron-sulfur clusters, as well as erythropoiesis. This chain is Mitochondrial glutathione transporter SLC25A39 (SLC25A39), found in Bos taurus (Bovine).